The sequence spans 163 residues: Cyanate hydratase (163 aa).

Active-site residues include arginine 103, glutamate 106, and serine 129.

The protein belongs to the cyanase family.

It catalyses the reaction cyanate + hydrogencarbonate + 3 H(+) = NH4(+) + 2 CO2. In terms of biological role, catalyzes the reaction of cyanate with bicarbonate to produce ammonia and carbon dioxide. The polypeptide is Cyanate hydratase (Ajellomyces capsulatus (strain G186AR / H82 / ATCC MYA-2454 / RMSCC 2432) (Darling's disease fungus)).